A 563-amino-acid polypeptide reads, in one-letter code: MKYRRLSLAHARQDSGQAASNARSRRFARLLCSSIAPLALGFSADAFAADETMASPFNRGAPNDAHGNLLDEIRRGVPLRHVPASERNTRGAGGSTLADAMRRVIDSRRTAFDSPPATPASPSPSWSDDESPPPTPIATRPASRPESAARSPRHSSPPHSPPASAESPSPRSPDASPSRTPSPTFSFPSPSRTSTPRTQPPSPLRERPERSPAASPRVASPRSAHSRGSTQPPSNLSTPRYEPPTPLQEDPERTPVASPRVASPRSAHSRGSTQPPSNLSTPRYEPPTPLQEDPERTPVASPHVTPAEHAQRRPFLLQKPPQVPSWRKKAPSATLPDSHAPARPGGGQFTTPASGAAKYVAVNSGASDAFAAGVNAVAIGADARAQGQESLATGWRAQADGHRAVATGARAIASGRDAVALGAGSIADRDNTVSVGQRGSERQIVHVAPGAQGTDAVNVDQLNLAISNSNAYTNQRIGDLQQSITETARDAYSGVAAATALTMIPDVDRDKMLSIGVGGAVYKGHRAVALGGTARIGENLKVRAGVAMSAGGNTVGVGMSWQW.

Positions 1–20 (MKYRRLSLAHARQDSGQAAS) are disordered. The signal sequence occupies residues 1-48 (MKYRRLSLAHARQDSGQAASNARSRRFARLLCSSIAPLALGFSADAFA). Residues 61–472 (APNDAHGNLL…NLAISNSNAY (412 aa)) form a surface exposed passenger domain region. Positions 65–82 (AHGNLLDEIRRGVPLRHV) constitute a WH2 domain. The interval 96-130 (TLADAMRRVIDSRRTAFDSPPATPASPSPSWSDDE) is central and acidic domains. The disordered stretch occupies residues 109-350 (RTAFDSPPAT…PARPGGGQFT (242 aa)). 3 stretches are compositionally biased toward low complexity: residues 138 to 150 (ATRPASRPESAAR), 162 to 197 (PASAESPSPRSPDASPSRTPSPTFSFPSPSRTSTPR), and 211 to 227 (SPAASPRVASPRSAHSR). Composition is skewed to polar residues over residues 228-238 (GSTQPPSNLST) and 269-281 (SRGSTQPPSNLST). The outer membrane translocation of the passenger domain stretch occupies residues 473 to 509 (TNQRIGDLQQSITETARDAYSGVAAATALTMIPDVDR). 4 beta stranded membrane passes run 510–519 (DKMLSIGVGG), 525–536 (HRAVALGGTARI), 543–549 (RAGVAMS), and 553–563 (NTVGVGMSWQW). The tract at residues 510–563 (DKMLSIGVGGAVYKGHRAVALGGTARIGENLKVRAGVAMSAGGNTVGVGMSWQW) is translocator domain.

Belongs to the autotransporter-2 (AT-2) (TC 1.B.40) family. Homotrimer. Interacts with host G-actin; the interaction is direct. Interacts (via central and acidic domains) with host ACTR2/ARP2 and ACTR3/ARP3.

The protein resides in the cell outer membrane. It localises to the cell surface. Its function is as follows. During host cell infection, required for actin-based intracellular motility. Mediates actin tail formation at one pole of the bacteria surface by recruiting host Arp2/3 (ACTR3/ARP3-ACTR2/ARP2) which leads to actin polymerization which provides the propulsive force for intracellular movement and intercellular dissemination of the bacterium. This chain is Autotransporter BimA, found in Burkholderia thailandensis (strain ATCC 700388 / DSM 13276 / CCUG 48851 / CIP 106301 / E264).